Reading from the N-terminus, the 659-residue chain is Interferon-induced GTP-binding protein Mx3 (659 aa).

The 274-residue stretch at 65–338 (DLALPAIAVI…LISHICKSLP (274 aa)) folds into the Dynamin-type G domain. The G1 motif stretch occupies residues 75 to 82 (GDQSSGKS). 75–82 (GDQSSGKS) serves as a coordination point for GTP. Positions 100-102 (VTR) are G2 motif. A G3 motif region spans residues 176 to 179 (DLPG). GTP-binding positions include 176–180 (DLPGI) and 245–248 (TKPD). A G4 motif region spans residues 245-248 (TKPD). The tract at residues 277-280 (KCRG) is G5 motif. A disordered region spans residues 547-568 (EAEEEERKHGKSRSAQSPNLQT). Positions 559–568 (RSAQSPNLQT) are enriched in polar residues. A GED domain is found at 571–659 (MDEIFQHLNA…AQRRLAKFPG (89 aa)).

Belongs to the TRAFAC class dynamin-like GTPase superfamily. Dynamin/Fzo/YdjA family.

The protein resides in the cytoplasm. Its function is as follows. Does not show activity against influenza virus or VSV; although it only differs from Mx2 by 8 positions. The sequence is that of Interferon-induced GTP-binding protein Mx3 (Mx3) from Rattus norvegicus (Rat).